We begin with the raw amino-acid sequence, 400 residues long: Golgin-45 (400 aa).

The disordered stretch occupies residues 1–36; that stretch reads MEKMTTLKSFESKGILTSTPIRGAGDGMETEEPPKS. Residues 22–26 carry the Tankyrase-binding motif motif; it reads RGAGD. Ser-53 bears the Phosphoserine mark. A coiled-coil region spans residues 126 to 263; sequence LSEVKKVLEK…LSEREQFRQE (138 aa). Ser-356 carries the post-translational modification Phosphoserine. The essential for interaction with GORASP2 stretch occupies residues 394-400; that stretch reads QGELLAL.

Interacts with GORASP2. Interacts with the GTP-bound form of RAB2, but not with other Golgi Rab proteins. Identified in a complex with RAB2 and GORASP2. ADP-ribosylated by tankyrase TNKS and TNKS2. Poly-ADP-ribosylated protein is recognized by RNF146, followed by ubiquitination. Post-translationally, ubiquitinated by RNF146 when poly-ADP-ribosylated, leading to its degradation.

It is found in the golgi apparatus membrane. Required for normal Golgi structure and for protein transport from the endoplasmic reticulum (ER) through the Golgi apparatus to the cell surface. The sequence is that of Golgin-45 from Rattus norvegicus (Rat).